The chain runs to 558 residues: Formate--tetrahydrofolate ligase (558 aa).

Residue 67–74 (TPAGEGKT) coordinates ATP.

Belongs to the formate--tetrahydrofolate ligase family.

The enzyme catalyses (6S)-5,6,7,8-tetrahydrofolate + formate + ATP = (6R)-10-formyltetrahydrofolate + ADP + phosphate. It functions in the pathway one-carbon metabolism; tetrahydrofolate interconversion. This Sphingobium sp. (strain NBRC 103272 / SYK-6) protein is Formate--tetrahydrofolate ligase.